The sequence spans 192 residues: Acetolactate synthase small subunit (192 aa).

The ACT domain occupies 29–103 (IITVKVRNEM…DTLKVSDLTD (75 aa)).

This sequence belongs to the acetolactate synthase small subunit family. As to quaternary structure, dimer of large and small chains.

The catalysed reaction is 2 pyruvate + H(+) = (2S)-2-acetolactate + CO2. Its pathway is amino-acid biosynthesis; L-isoleucine biosynthesis; L-isoleucine from 2-oxobutanoate: step 1/4. It participates in amino-acid biosynthesis; L-valine biosynthesis; L-valine from pyruvate: step 1/4. The protein is Acetolactate synthase small subunit (ilvH) of Aquifex aeolicus (strain VF5).